The following is a 209-amino-acid chain: Cytidylate kinase (209 aa).

7-15 is a binding site for ATP; sequence GPAASGKGT.

The protein belongs to the cytidylate kinase family. Type 1 subfamily.

The protein resides in the cytoplasm. It catalyses the reaction CMP + ATP = CDP + ADP. It carries out the reaction dCMP + ATP = dCDP + ADP. This is Cytidylate kinase from Afipia carboxidovorans (strain ATCC 49405 / DSM 1227 / KCTC 32145 / OM5) (Oligotropha carboxidovorans).